A 292-amino-acid chain; its full sequence is ATP synthase gamma chain (292 aa).

It belongs to the ATPase gamma chain family. F-type ATPases have 2 components, CF(1) - the catalytic core - and CF(0) - the membrane proton channel. CF(1) has five subunits: alpha(3), beta(3), gamma(1), delta(1), epsilon(1). CF(0) has three main subunits: a, b and c.

The protein resides in the cell inner membrane. In terms of biological role, produces ATP from ADP in the presence of a proton gradient across the membrane. The gamma chain is believed to be important in regulating ATPase activity and the flow of protons through the CF(0) complex. The protein is ATP synthase gamma chain of Syntrophobacter fumaroxidans (strain DSM 10017 / MPOB).